The sequence spans 252 residues: RNA-binding protein 7 (252 aa).

An RRM domain is found at 9-86; sequence RTLFVGNLDP…RQLNIKFKTG (78 aa). Polar residues-rich tracts occupy residues 88 to 107 and 119 to 137; these read SHINQEGKSPANSQNPSPAN and QMGSPSYSPPQHMQRPFSS. Disordered stretches follow at residues 88 to 137 and 171 to 252; these read SHIN…PFSS and QLRG…WKHF. 2 stretches are compositionally biased toward basic and acidic residues: residues 211 to 230 and 237 to 252; these read ERNRRDGQRGDFYHHDDRSG and PPDRRRDSREGRWKHF.

Component of the nuclear exosome targeting (NEXT) complex composed of MTREX, ZCCHC8, and RBM7 that directs a subset of non-coding short-lived RNAs for exosomal degradation.

The protein localises to the nucleus. It is found in the nucleoplasm. RNA-binding subunit of the trimeric nuclear exosome targeting (NEXT) complex, a complex that functions as an RNA exosome cofactor that directs a subset of non-coding short-lived RNAs for exosomal degradation. NEXT is involved in surveillance and turnover of aberrant transcripts and non-coding RNAs. Binds preferentially polyuridine sequences and associates with newly synthesized RNAs, including pre-mRNAs and short-lived exosome substrates such as promoter upstream transcripts (PROMPTs), enhancer RNAs (eRNAs), and 3'-extended products from small nuclear RNAs (snRNAs). The sequence is that of RNA-binding protein 7 from Danio rerio (Zebrafish).